A 107-amino-acid chain; its full sequence is UPF0473 protein llmg_0152 (107 aa).

This sequence belongs to the UPF0473 family.

This is UPF0473 protein llmg_0152 from Lactococcus lactis subsp. cremoris (strain MG1363).